We begin with the raw amino-acid sequence, 80 residues long: Styelin-C (80 aa).

A signal peptide spans 1–22; the sequence is MQMKATILIVLVALFMIQQSEA. Trp-24 is subject to 6'-bromotryptophan. At Leu-53 the chain carries Leucine amide. Positions 55-80 are cleaved as a propeptide — removed in mature form; the sequence is DMTDEEFQEFMQDIEQAREEELLSRQ.

Its subcellular location is the secreted. Functionally, bactericidal against several Gram-positive and Gram-negative bacteria. The polypeptide is Styelin-C (Styela clava (Sea squirt)).